The primary structure comprises 799 residues: Pentatricopeptide repeat-containing protein At2g26790, mitochondrial (799 aa).

The transit peptide at 1–27 directs the protein to the mitochondrion; the sequence is MRFSPTFFLLSQLRLTRRRAATSSRFY. 18 PPR repeats span residues 145 to 179, 180 to 214, 215 to 250, 251 to 278, 282 to 316, 317 to 351, 352 to 386, 387 to 421, 422 to 456, 457 to 491, 492 to 522, 523 to 553, 555 to 589, 590 to 624, 625 to 659, 660 to 695, 708 to 742, and 743 to 777; these read LIRV…DCVV, DIKA…GLCA, NEYT…GYKT, FING…KYLA, LRAV…GFGL, DVYA…GLKV, NCVI…NIFL, DRVC…GIVP, DVIN…GMSP, DLIT…GPKP, NAVT…LEQK, CPEN…LEYP, RKSV…RVEP, GRSM…GLIP, DLFT…GIKP, DVVT…KASE, DVVC…GLEP, and DMVA…YNIP.

Belongs to the PPR family. P subfamily.

It is found in the mitochondrion. This Arabidopsis thaliana (Mouse-ear cress) protein is Pentatricopeptide repeat-containing protein At2g26790, mitochondrial.